Reading from the N-terminus, the 249-residue chain is Segregation and condensation protein A (249 aa).

This sequence belongs to the ScpA family. Component of a cohesin-like complex composed of ScpA, ScpB and the Smc homodimer, in which ScpA and ScpB bind to the head domain of Smc. The presence of the three proteins is required for the association of the complex with DNA.

It localises to the cytoplasm. Participates in chromosomal partition during cell division. May act via the formation of a condensin-like complex containing Smc and ScpB that pull DNA away from mid-cell into both cell halves. The protein is Segregation and condensation protein A of Clostridium acetobutylicum (strain ATCC 824 / DSM 792 / JCM 1419 / IAM 19013 / LMG 5710 / NBRC 13948 / NRRL B-527 / VKM B-1787 / 2291 / W).